A 535-amino-acid polypeptide reads, in one-letter code: Serum response factor-binding protein 1 (535 aa).

Coiled coils occupy residues 5–27 and 107–177; these read LNLN…LIIR and LKQK…EKCK. Composition is skewed to basic and acidic residues over residues 128 to 151, 159 to 191, 205 to 325, 361 to 376, 406 to 432, and 460 to 472; these read AAEG…ETKK, KNTE…EKAL, AENK…ERPV, DKEK…ERFY, SDKD…EVQK, and TKRE…ERNK. Disordered regions lie at residues 128–435 and 453–535; these read AAEG…KEIP and TKPK…VFDD.

The protein localises to the cytoplasm. The protein resides in the perinuclear region. Functionally, may be involved in regulating transcriptional activation of cardiac genes during the aging process. May play a role in biosynthesis and/or processing of SLC2A4 in adipose cells. This Xenopus tropicalis (Western clawed frog) protein is Serum response factor-binding protein 1.